The following is a 325-amino-acid chain: Lipoyl synthase (325 aa).

[4Fe-4S] cluster is bound by residues C66, C71, C77, C92, C96, C99, and S303. The region spanning 78–292 (WEDREATFLI…AQFAEGLGFA (215 aa)) is the Radical SAM core domain.

This sequence belongs to the radical SAM superfamily. Lipoyl synthase family. The cofactor is [4Fe-4S] cluster.

It localises to the cytoplasm. It carries out the reaction [[Fe-S] cluster scaffold protein carrying a second [4Fe-4S](2+) cluster] + N(6)-octanoyl-L-lysyl-[protein] + 2 oxidized [2Fe-2S]-[ferredoxin] + 2 S-adenosyl-L-methionine + 4 H(+) = [[Fe-S] cluster scaffold protein] + N(6)-[(R)-dihydrolipoyl]-L-lysyl-[protein] + 4 Fe(3+) + 2 hydrogen sulfide + 2 5'-deoxyadenosine + 2 L-methionine + 2 reduced [2Fe-2S]-[ferredoxin]. It functions in the pathway protein modification; protein lipoylation via endogenous pathway; protein N(6)-(lipoyl)lysine from octanoyl-[acyl-carrier-protein]: step 2/2. Its function is as follows. Catalyzes the radical-mediated insertion of two sulfur atoms into the C-6 and C-8 positions of the octanoyl moiety bound to the lipoyl domains of lipoate-dependent enzymes, thereby converting the octanoylated domains into lipoylated derivatives. This is Lipoyl synthase from Mycobacterium sp. (strain JLS).